Consider the following 75-residue polypeptide: Large ribosomal subunit protein uL29 (75 aa).

The protein belongs to the universal ribosomal protein uL29 family.

In Ureaplasma urealyticum serovar 10 (strain ATCC 33699 / Western), this protein is Large ribosomal subunit protein uL29.